The following is a 130-amino-acid chain: Protein BLT4 (130 aa).

Residues M1–A25 form the signal peptide. The interval V80–G130 is disordered. Residues T84 to A110 show a composition bias toward low complexity. Residues S113–G130 are compositionally biased toward basic and acidic residues.

The protein belongs to the plant LTP family. As to expression, shoot meristem.

Possible dehydrative stress responsive protein. Not shown to have lipid transfer activity. This chain is Protein BLT4 (BLT4), found in Hordeum vulgare (Barley).